We begin with the raw amino-acid sequence, 312 residues long: Glycine--tRNA ligase alpha subunit (312 aa).

It belongs to the class-II aminoacyl-tRNA synthetase family. As to quaternary structure, tetramer of two alpha and two beta subunits.

It is found in the cytoplasm. It catalyses the reaction tRNA(Gly) + glycine + ATP = glycyl-tRNA(Gly) + AMP + diphosphate. The polypeptide is Glycine--tRNA ligase alpha subunit (Nostoc punctiforme (strain ATCC 29133 / PCC 73102)).